Consider the following 639-residue polypeptide: ATP-dependent RNA helicase DDX51 (639 aa).

Residues 1 to 131 (MALFHIARYA…QEDVQRPPAP (131 aa)) are disordered. N-acetylalanine is present on A2. Residues 24–48 (AGSRARVLLERLQNRARERQQREPE) are compositionally biased toward basic and acidic residues. Residues 50 to 63 (ETTGTAGEGEAAAA) show a composition bias toward low complexity. The span at 64 to 76 (GKRRRRPRRRRRV) shows a compositional bias: basic residues. At S79 the chain carries Phosphoserine. The span at 94 to 105 (ADKDVDAGRGEE) shows a compositional bias: basic and acidic residues. Residues 193-201 (YFPVQAAVI) carry the Q motif motif. One can recognise a Helicase ATP-binding domain in the interval 215 to 424 (GRGGYQPSDL…RLGLYQPRLF (210 aa)). ATP is bound at residue 228–235 (APTGSGKT). A DEAD box motif is present at residues 343–346 (DEAD). S432 is subject to Phosphoserine. The region spanning 467-615 (IVLHLVLRMS…EIPRKLLQPL (149 aa)) is the Helicase C-terminal domain.

This sequence belongs to the DEAD box helicase family. DDX51/DBP6 subfamily.

The protein localises to the nucleus. Its subcellular location is the nucleolus. The catalysed reaction is ATP + H2O = ADP + phosphate + H(+). In terms of biological role, ATP-binding RNA helicase involved in the biogenesis of 60S ribosomal subunits. This is ATP-dependent RNA helicase DDX51 (Ddx51) from Mus musculus (Mouse).